A 900-amino-acid chain; its full sequence is Formin-like protein 5 (900 aa).

A helical; Signal-anchor membrane pass occupies residues 15 to 32; it reads SRLVFWLILFSGLLVITL. Residues 136 to 209 form a disordered region; that stretch reads RNLATKPGSS…PVSPAKKKED (74 aa). Residues 160–173 show a composition bias toward pro residues; sequence PPRPPTRPKSPPPR. Residues 214-234 form a helical membrane-spanning segment; the sequence is IIIAVVVTAVSTFLLAALFFL. Disordered regions lie at residues 273 to 440 and 849 to 900; these read SVKG…DAPK and ARGR…SDSD. Residues 281–304 show a composition bias toward polar residues; the sequence is HQSFNIYSNQGKMSSFDGSNSDTS. Residues 307–316 are compositionally biased toward basic and acidic residues; that stretch reads LEERLSHEGL. The segment covering 359–368 has biased composition (low complexity); sequence FLKVSSKKAS. Pro residues predominate over residues 369-429; it reads APPPPVPAPQ…GPKAPRPPSG (61 aa). Residues 433–865 form the FH2 domain; that stretch reads ALDDDAPKTK…MARKQGSTAS (433 aa). A compositionally biased stretch (polar residues) spans 860–876; the sequence is QGSTASASSETPRQTPS.

It belongs to the formin-like family. Class-I subfamily. In terms of tissue distribution, expressed in the endosperm. Localizes to the cell plate, a plant-specific membranous component that is assembled at the plane of cell division.

It is found in the membrane. Might be involved in the organization and polarity of the actin cytoskeleton. Interacts with the barbed end of actin filaments and nucleates actin-filament polymerization in vitro. Seems to play a role in cytokinesis. The protein is Formin-like protein 5 (FH5) of Arabidopsis thaliana (Mouse-ear cress).